Consider the following 95-residue polypeptide: Small ribosomal subunit protein bS6 (95 aa).

The protein belongs to the bacterial ribosomal protein bS6 family. Part of the 30S ribosomal subunit.

Binds together with bS18 to 16S ribosomal RNA. This chain is Small ribosomal subunit protein bS6 (rpsF), found in Bacillus subtilis (strain 168).